The chain runs to 154 residues: 17.6 kDa class I heat shock protein (154 aa).

The region spanning 40-154 (ETSAFANTRI…PDVKSIEISG (115 aa)) is the sHSP domain.

Belongs to the small heat shock protein (HSP20) family. As to quaternary structure, forms oligomeric structures.

The protein localises to the cytoplasm. The polypeptide is 17.6 kDa class I heat shock protein (Solanum peruvianum (Peruvian tomato)).